Here is a 460-residue protein sequence, read N- to C-terminus: Ammonium transporter 1 member 3 (460 aa).

The next 10 helical transmembrane spans lie at 15 to 37 (AIYLLFSAYLVFVMQLGFAMLCA), 50 to 72 (LTNVVDAVVGSLSYYLFGFAFAF), 98 to 117 (FFLYQWAFAIAVAGITSGSI), 124 to 146 (TAYLVFSFFLTGFVYPVVAHWLW), 166 to 188 (IDFAGSGVVHLVGGIAGFWGSIV), 209 to 227 (NATLVVLGTLLLWFGWFGF), 255 to 277 (AVTTTLAGSTAGIVTLFGRRLLV), 305 to 327 (PWAAILCGFCAAWVLIGLNILAL), 337 to 356 (AAQLHGGCGAWGLIFTGLFA), and 377 to 399 (GLILGGGWGLFGAQIVELLSIVV).

It belongs to the ammonia transporter channel (TC 1.A.11.2) family. Leaves.

The protein resides in the membrane. In terms of biological role, ammonium transporter that may be involved in ammonium transport throughout the plant. In Solanum lycopersicum (Tomato), this protein is Ammonium transporter 1 member 3 (AMT1-3).